The primary structure comprises 262 residues: tRNA pseudouridine synthase A (262 aa).

Residue Asp52 is the Nucleophile of the active site. Residue Tyr103 participates in substrate binding.

The protein belongs to the tRNA pseudouridine synthase TruA family.

The catalysed reaction is uridine(38/39/40) in tRNA = pseudouridine(38/39/40) in tRNA. Formation of pseudouridine at positions 38, 39 and 40 in the anticodon stem and loop of transfer RNAs. This chain is tRNA pseudouridine synthase A, found in Methanococcus maripaludis (strain DSM 14266 / JCM 13030 / NBRC 101832 / S2 / LL).